A 247-amino-acid polypeptide reads, in one-letter code: Submandibular gland secretory Glx-rich protein CB (247 aa).

An N-terminal signal peptide occupies residues 1–18 (MLVVLLTAALLALSSAQG). The interval 14 to 219 (SSAQGTDEEV…PQHYRGRPPK (206 aa)) is disordered. Composition is skewed to low complexity over residues 39 to 50 (PVDSGSDPPSAD), 58 to 71 (EGESAPPANEEPPA), 81 to 93 (QQEPTQAENQEPP), 104 to 116 (QQEPTQAENQEPP), 126 to 139 (QQQQPTQAENQEPP), 150 to 159 (QQESTQAENQ), and 178 to 196 (VESPPSSPENSQEQPQQTN). A run of 5 repeats spans residues 67 to 89 (EEPPATSGSEEEQQQQEPTQAEN), 90 to 112 (QEPPATSGSEEEQQQQEPTQAEN), 113 to 135 (QEPPATSGSEEEQQQQQPTQAEN), 136 to 158 (QEPPATSGSEEEQQQQESTQAEN), and 159 to 181 (QEPSDSAGEGQETQPEEGNVESP). A 5 X 23 AA tandem repeats region spans residues 67–181 (EEPPATSGSE…QPEEGNVESP (115 aa)). Positions 197–212 (PEEKPPAPKTQEEPQH) are enriched in basic and acidic residues.

As to expression, submandibular gland acinar cells.

It is found in the secreted. In terms of biological role, GRP proteins have a marked affinity for hydroxyapatite. They may play a role in the formation of the protective acquired pellicle at the saliva-tooth interface. This is Submandibular gland secretory Glx-rich protein CB (Grpcb) from Rattus norvegicus (Rat).